The following is a 398-amino-acid chain: Methionine aminopeptidase 1A (398 aa).

Alanine 2 carries the post-translational modification N-acetylalanine. A C6H2-type zinc finger spans residues threonine 12 to serine 65. Residues cysteine 15, cysteine 18, cysteine 26, cysteine 29, cysteine 42, cysteine 46, histidine 54, and histidine 58 each coordinate Zn(2+). A protein is bound at residue histidine 214. Zn(2+) contacts are provided by aspartate 231, aspartate 242, and histidine 305. Residue histidine 312 coordinates a protein. Zn(2+) contacts are provided by glutamate 338 and glutamate 369.

It belongs to the peptidase M24A family. Methionine aminopeptidase type 1 subfamily. In terms of assembly, associates with the 60S ribosomal subunit of the 80S translational complex. Requires Zn(2+) as cofactor. Co(2+) is required as a cofactor. The cofactor is Mn(2+). It depends on Fe(2+) as a cofactor. Ubiquitous.

It localises to the cytoplasm. The catalysed reaction is Release of N-terminal amino acids, preferentially methionine, from peptides and arylamides.. Its function is as follows. Cotranslationally removes the N-terminal methionine from nascent proteins. The N-terminal methionine is often cleaved when the second residue in the primary sequence is small and uncharged (Met-Ala-, Cys, Gly, Pro, Ser, Thr, or Val). This is Methionine aminopeptidase 1A (MAP1A) from Arabidopsis thaliana (Mouse-ear cress).